A 364-amino-acid polypeptide reads, in one-letter code: Alanine racemase (364 aa).

Lys34 serves as the catalytic Proton acceptor; specific for D-alanine. The residue at position 34 (Lys34) is an N6-(pyridoxal phosphate)lysine. Arg129 is a binding site for substrate. The Proton acceptor; specific for L-alanine role is filled by Tyr259. A substrate-binding site is contributed by Met307.

The protein belongs to the alanine racemase family. It depends on pyridoxal 5'-phosphate as a cofactor.

It catalyses the reaction L-alanine = D-alanine. The protein operates within amino-acid biosynthesis; D-alanine biosynthesis; D-alanine from L-alanine: step 1/1. Functionally, catalyzes the interconversion of L-alanine and D-alanine. May also act on other amino acids. The sequence is that of Alanine racemase (alr) from Coxiella burnetii (strain RSA 493 / Nine Mile phase I).